The sequence spans 270 residues: MSVEQSLLGKETQYPTSYQPDVLFPIARAQSREKYAHIEGITQGKDWWHVFEISWLNAHGIPQVAIGRITLPASSPNLIESKSLKLYFNSLNFTQFDSTQSFIETVEKDLSAAAGAKVELTLFQVDDLEISKPQGICIDDLMPERLEQHPDATLLKLDESDEEIEVELYSHLLRSNCPVTGQPDWGTVFIRFKGKKPCYRSILAYIISYRQHNGFHEQCVEQIFADIWQNLQPEKLMVYATYTRRGGLDINPCRVSDLTWMPKPIRLARQ.

79 to 81 provides a ligand contact to substrate; sequence IES. 81–82 is a binding site for NADPH; sequence SK. Cys-177 serves as the catalytic Thioimide intermediate. Asp-184 serves as the catalytic Proton donor. 216 to 217 serves as a coordination point for substrate; sequence HE. 245–246 is a binding site for NADPH; the sequence is RG.

This sequence belongs to the GTP cyclohydrolase I family. QueF type 2 subfamily. Homodimer.

The protein localises to the cytoplasm. The catalysed reaction is 7-aminomethyl-7-carbaguanine + 2 NADP(+) = 7-cyano-7-deazaguanine + 2 NADPH + 3 H(+). Its pathway is tRNA modification; tRNA-queuosine biosynthesis. Functionally, catalyzes the NADPH-dependent reduction of 7-cyano-7-deazaguanine (preQ0) to 7-aminomethyl-7-deazaguanine (preQ1). This Acinetobacter baumannii (strain ATCC 17978 / DSM 105126 / CIP 53.77 / LMG 1025 / NCDC KC755 / 5377) protein is NADPH-dependent 7-cyano-7-deazaguanine reductase.